The following is a 295-amino-acid chain: MAQKEKDALSGVETTGHEWDGLRELNNPLPKWWLYIFYVCIAWSLVYYVLYPAWPLGKSYTKGLLGYSQREELVQKVADGKKAQEKYLTAIAATSVEDIQKNKDLLAFAMAGGRSYFNENCAACHGAGGQGAKGFPTLADDVWLWGGTTADIYKTIQHGIRADDGDTRGTVGIGMTAFGRDGILNRDQIGQVAEYILSLNKRSTDAAAAEKGKTVYDENCAACHGENAQGSLAVGMEVGAPPLVTGNWLYGGDKATLVQTITNGRAGVMPAWSKRLDDATIKSLAVYVHNLGGGK.

The Cytoplasmic portion of the chain corresponds to 1 to 31 (MAQKEKDALSGVETTGHEWDGLRELNNPLPK). A helical membrane pass occupies residues 32–52 (WWLYIFYVCIAWSLVYYVLYP). The Periplasmic segment spans residues 53-295 (AWPLGKSYTK…VYVHNLGGGK (243 aa)). Cytochrome c domains follow at residues 108–200 (FAMA…LSLN) and 207–292 (AAAE…HNLG). The heme c site is built by cysteine 121, cysteine 124, histidine 125, methionine 175, cysteine 220, cysteine 223, histidine 224, and methionine 269.

Belongs to the CcoP / FixP family. In terms of assembly, component of the cbb3-type cytochrome c oxidase at least composed of CcoN, CcoO, CcoQ and CcoP. Heme c is required as a cofactor.

The protein localises to the cell inner membrane. It participates in energy metabolism; oxidative phosphorylation. In terms of biological role, C-type cytochrome. Part of the cbb3-type cytochrome c oxidase complex. CcoP subunit is required for transferring electrons from donor cytochrome c via its heme groups to CcoO subunit. From there, electrons are shuttled to the catalytic binuclear center of CcoN subunit where oxygen reduction takes place. The complex also functions as a proton pump. The sequence is that of Cbb3-type cytochrome c oxidase subunit CcoP from Azospirillum brasilense.